The following is a 259-amino-acid chain: Dihydroorotate dehydrogenase B (NAD(+)), electron transfer subunit (259 aa).

The FAD-binding FR-type domain occupies 2-102 (MQKQNMIVVN…LGPLGHGFPV (101 aa)). Residues 53 to 56 (RPIS), 70 to 72 (LYR), and 77 to 78 (GT) contribute to the FAD site. [2Fe-2S] cluster is bound by residues Cys-221, Cys-226, Cys-229, and Cys-246.

This sequence belongs to the PyrK family. Heterotetramer of 2 PyrK and 2 PyrD type B subunits. [2Fe-2S] cluster serves as cofactor. FAD is required as a cofactor.

Its pathway is pyrimidine metabolism; UMP biosynthesis via de novo pathway; orotate from (S)-dihydroorotate (NAD(+) route): step 1/1. Responsible for channeling the electrons from the oxidation of dihydroorotate from the FMN redox center in the PyrD type B subunit to the ultimate electron acceptor NAD(+). The chain is Dihydroorotate dehydrogenase B (NAD(+)), electron transfer subunit from Bacillus cereus (strain 03BB102).